A 458-amino-acid chain; its full sequence is PH domain-containing protein DDB_G0274775 (458 aa).

Residues 15–112 (PSDREGWLTK…WMESIKRNLD (98 aa)) enclose the PH domain. The interval 111–154 (LDGEGGMKSGGNDIVSSPKINSEPTPKVNQNGSAPEKSSLSSPR) is disordered. Residues 124-142 (IVSSPKINSEPTPKVNQNG) show a composition bias toward polar residues. Low complexity predominate over residues 143–154 (SAPEKSSLSSPR).

The protein is PH domain-containing protein DDB_G0274775 of Dictyostelium discoideum (Social amoeba).